A 200-amino-acid polypeptide reads, in one-letter code: MKIAILIRHGESDINVKGILSDTIDNNMLTEKGMRQAEHAAAELKGIDIKNFYSSPIKRAFDTAQIIADSFNKDVVTDQRLIEIGLGKARGRKANEFTNGLYSGHITGKIREDLEMEKWDSLQKRVVEAIASREGINVYVTHSDPIRAAISYFLEMGEEETYGLSIKNASMTVIDVEIGRILTLGAISMTDSVRKYLNIQ.

Catalysis depends on histidine 9, which acts as the Tele-phosphohistidine intermediate. The active site involves histidine 142.

It belongs to the phosphoglycerate mutase family. Homodimer.

The catalysed reaction is (2R)-2-phosphoglycerate = (2R)-3-phosphoglycerate. Its pathway is carbohydrate degradation; glycolysis; pyruvate from D-glyceraldehyde 3-phosphate: step 3/5. Functionally, catalyzes the interconversion of 2-phosphoglycerate and 3-phosphoglycerate. In Thermoplasma acidophilum (strain ATCC 25905 / DSM 1728 / JCM 9062 / NBRC 15155 / AMRC-C165), this protein is 2,3-bisphosphoglycerate-dependent phosphoglycerate mutase.